The chain runs to 336 residues: tRNA N6-adenosine threonylcarbamoyltransferase (336 aa).

Fe cation is bound by residues His-114 and His-118. Residues 136 to 140 (LVSGG), Asp-169, Gly-182, Asp-186, and Asn-275 contribute to the substrate site. Asp-301 is a Fe cation binding site.

Belongs to the KAE1 / TsaD family. Fe(2+) serves as cofactor.

Its subcellular location is the cytoplasm. It carries out the reaction L-threonylcarbamoyladenylate + adenosine(37) in tRNA = N(6)-L-threonylcarbamoyladenosine(37) in tRNA + AMP + H(+). Functionally, required for the formation of a threonylcarbamoyl group on adenosine at position 37 (t(6)A37) in tRNAs that read codons beginning with adenine. Is involved in the transfer of the threonylcarbamoyl moiety of threonylcarbamoyl-AMP (TC-AMP) to the N6 group of A37, together with TsaE and TsaB. TsaD likely plays a direct catalytic role in this reaction. This chain is tRNA N6-adenosine threonylcarbamoyltransferase, found in Streptococcus mutans serotype c (strain ATCC 700610 / UA159).